Consider the following 113-residue polypeptide: UPF0482 protein YnfB (113 aa).

A signal peptide spans 1-28 (MKITLSKRIGLLAFLLPCALALSTTVHA).

This sequence belongs to the UPF0482 family.

The sequence is that of UPF0482 protein YnfB from Shigella dysenteriae serotype 1 (strain Sd197).